We begin with the raw amino-acid sequence, 160 residues long: Cytochrome b6-f complex subunit 4 (160 aa).

Transmembrane regions (helical) follow at residues 36 to 56 (LLYIFPVVILGTIACNVGLAV), 95 to 115 (LLGVLLMVSVPAGLLTVPFLE), and 131 to 151 (TVFLIGTAVALWLGIGATLPI).

It belongs to the cytochrome b family. PetD subfamily. In terms of assembly, the 4 large subunits of the cytochrome b6-f complex are cytochrome b6, subunit IV (17 kDa polypeptide, petD), cytochrome f and the Rieske protein, while the 4 small subunits are petG, petL, petM and petN. The complex functions as a dimer.

Its subcellular location is the plastid. It is found in the chloroplast thylakoid membrane. In terms of biological role, component of the cytochrome b6-f complex, which mediates electron transfer between photosystem II (PSII) and photosystem I (PSI), cyclic electron flow around PSI, and state transitions. In Coffea arabica (Arabian coffee), this protein is Cytochrome b6-f complex subunit 4.